A 227-amino-acid polypeptide reads, in one-letter code: Cytochrome c oxidase subunit 2 (227 aa).

N-formylmethionine is present on methionine 1. Residues 1–14 lie on the Mitochondrial intermembrane side of the membrane; sequence MAYPMQLGFQDATS. The helical transmembrane segment at 15-45 threads the bilayer; sequence PIMEELLHFHDHTLMIVFLISSLVLYIISLM. The Mitochondrial matrix segment spans residues 46 to 59; sequence LTTKLTHTSTMDAQ. A helical transmembrane segment spans residues 60–87; it reads EVETIWTILPAIILILIALPSLRILYMM. Over 88–227 the chain is Mitochondrial intermembrane; it reads DEINNPSLTV…YFEKWSASML (140 aa). 6 residues coordinate Cu cation: histidine 161, cysteine 196, glutamate 198, cysteine 200, histidine 204, and methionine 207. Glutamate 198 is a binding site for Mg(2+). Tyrosine 218 carries the post-translational modification Phosphotyrosine.

Belongs to the cytochrome c oxidase subunit 2 family. As to quaternary structure, component of the cytochrome c oxidase (complex IV, CIV), a multisubunit enzyme composed of 14 subunits. The complex is composed of a catalytic core of 3 subunits MT-CO1, MT-CO2 and MT-CO3, encoded in the mitochondrial DNA, and 11 supernumerary subunits COX4I, COX5A, COX5B, COX6A, COX6B, COX6C, COX7A, COX7B, COX7C, COX8 and NDUFA4, which are encoded in the nuclear genome. The complex exists as a monomer or a dimer and forms supercomplexes (SCs) in the inner mitochondrial membrane with NADH-ubiquinone oxidoreductase (complex I, CI) and ubiquinol-cytochrome c oxidoreductase (cytochrome b-c1 complex, complex III, CIII), resulting in different assemblies (supercomplex SCI(1)III(2)IV(1) and megacomplex MCI(2)III(2)IV(2)). Found in a complex with TMEM177, COA6, COX18, COX20, SCO1 and SCO2. Interacts with TMEM177 in a COX20-dependent manner. Interacts with COX20. Interacts with COX16. It depends on Cu cation as a cofactor.

The protein resides in the mitochondrion inner membrane. It catalyses the reaction 4 Fe(II)-[cytochrome c] + O2 + 8 H(+)(in) = 4 Fe(III)-[cytochrome c] + 2 H2O + 4 H(+)(out). Functionally, component of the cytochrome c oxidase, the last enzyme in the mitochondrial electron transport chain which drives oxidative phosphorylation. The respiratory chain contains 3 multisubunit complexes succinate dehydrogenase (complex II, CII), ubiquinol-cytochrome c oxidoreductase (cytochrome b-c1 complex, complex III, CIII) and cytochrome c oxidase (complex IV, CIV), that cooperate to transfer electrons derived from NADH and succinate to molecular oxygen, creating an electrochemical gradient over the inner membrane that drives transmembrane transport and the ATP synthase. Cytochrome c oxidase is the component of the respiratory chain that catalyzes the reduction of oxygen to water. Electrons originating from reduced cytochrome c in the intermembrane space (IMS) are transferred via the dinuclear copper A center (CU(A)) of subunit 2 and heme A of subunit 1 to the active site in subunit 1, a binuclear center (BNC) formed by heme A3 and copper B (CU(B)). The BNC reduces molecular oxygen to 2 water molecules using 4 electrons from cytochrome c in the IMS and 4 protons from the mitochondrial matrix. The chain is Cytochrome c oxidase subunit 2 (MT-CO2) from Bos indicus (Zebu).